We begin with the raw amino-acid sequence, 307 residues long: Chaperone protein DnaJ 2 (307 aa).

A J domain is found at 6–71 (NYYQILGVPR…TKRRELDSRL (66 aa)). The tract at residues 69 to 133 (SRLFGRFRRP…TRRTKVVSPA (65 aa)) is disordered. Residues 88-99 (NGGRSPNGTSVN) are compositionally biased toward polar residues. A compositionally biased stretch (low complexity) spans 100–114 (GQVRTPTGRTGTRQP).

This sequence belongs to the DnaJ family. As to quaternary structure, homodimer. Requires Zn(2+) as cofactor.

Its subcellular location is the cytoplasm. Its function is as follows. Participates actively in the response to hyperosmotic and heat shock by preventing the aggregation of stress-denatured proteins and by disaggregating proteins, also in an autonomous, DnaK-independent fashion. Unfolded proteins bind initially to DnaJ; upon interaction with the DnaJ-bound protein, DnaK hydrolyzes its bound ATP, resulting in the formation of a stable complex. GrpE releases ADP from DnaK; ATP binding to DnaK triggers the release of the substrate protein, thus completing the reaction cycle. Several rounds of ATP-dependent interactions between DnaJ, DnaK and GrpE are required for fully efficient folding. Also involved, together with DnaK and GrpE, in the DNA replication of plasmids through activation of initiation proteins. In Synechocystis sp. (strain ATCC 27184 / PCC 6803 / Kazusa), this protein is Chaperone protein DnaJ 2 (dnaJ2).